The sequence spans 336 residues: Potassium channel subfamily K member 1 (336 aa).

Over 1–20 (MLQSLAGSSCVRLVERHRSA) the chain is Cytoplasmic. A helical membrane pass occupies residues 21-41 (WCFGFLVLGYLLYLVFGAVVF). Topologically, residues 42-103 (SSVELPYEDL…SNASGNWNWD (62 aa)) are extracellular. A glycan (N-linked (GlcNAc...) asparagine) is linked at asparagine 95. Residues 104–116 (FTSALFFASTVLS) constitute an intramembrane region (helical). The stretch at 117–122 (TTGYGH) is an intramembrane region. The interval 117–122 (TTGYGH) is selectivity filter 1. Over 123–132 (TVPLSDGGKA) the chain is Extracellular. The chain crosses the membrane as a helical span at residues 133–156 (FCIIYSVIGIPFTLLFLTAVVQRI). The Cytoplasmic portion of the chain corresponds to 157–181 (TVHVTRRPVLYFHIRWGFSKQVVAI). Residues 182-202 (VHAVLLGFVTVSCFFFIPAAV) form a helical membrane-spanning segment. At 203–211 (FSVLEDDWN) the chain is on the extracellular side. The segment at residues 212 to 224 (FLESFYFCFISLS) is an intramembrane region (helical). A selectivity filter 2 region spans residues 225-230 (TIGLGD). Residues 225-231 (TIGLGDY) lie within the membrane without spanning it. At 232–243 (VPGEGYNQKFRE) the chain is on the extracellular side. Residues 244-267 (LYKIGITCYLLLGLIAMLVVLETF) traverse the membrane as a helical segment. Topologically, residues 268–336 (CELHELKKFR…SACVDGPANH (69 aa)) are cytoplasmic. A Glycyl lysine isopeptide (Lys-Gly) (interchain with G-Cter in SUMO) cross-link involves residue lysine 274. The important for intracellular retention in recycling endosomes stretch occupies residues 293 to 299 (IIEHDQL). At serine 326 the chain carries Phosphoserine.

This sequence belongs to the two pore domain potassium channel (TC 1.A.1.8) family. Homodimer; disulfide-linked. Heterodimer with KCNK2; disulfide-linked. In astrocytes, forms mostly heterodimeric potassium channels with KCNK2, with only a minor proportion of functional channels containing homodimeric KCNK1. Interacts with KCNK3 and KCNK9, forming functional heterodimeric channels. Interacts with GNG4. Identified in a complex with PSD and ARF6; interacts only with PSD that is bound to ARF6. Interacts with UBE2I. Sumoylation is controversial. Sumoylated by UBE2I. Not sumoylated when expressed in xenopus oocytes or mammalian cells. Sumoylation inactivates the channel, but does not interfere with expression at the cell membrane. Sumoylation of a single subunit is sufficient to silence the dimeric channel. Sumoylation of KCNK1 is sufficient to silence heterodimeric channels formed by KCNK1 and KCNK3 or KCNK9. Desumoylated by SENP1; this activates the channel. Desumoylated by SENP1; this strongly increases halothane-mediated activation of heterodimeric channels formed with KCNK9. SENP1 treatment has no effect. In terms of tissue distribution, detected in bronchial epithelial cells. Detected in heart left atrium and left ventricle. Detected in cardiac myocytes (at protein level). Widely expressed with high levels in heart, brain and kidney, and lower levels in colon, ovary, placenta, lung and liver. Highly expressed in cerebellum, and detected at lower levels in amygdala, caudate nucleus, brain cortex, hippocampus, putamen, substantia nigra, thalamus, dorsal root ganglion, spinal cord, pituitary, heart, kidney, lung, placenta, pancreas, stomach, small intestine, uterus and prostate. Detected in right and left heart ventricle and atrium, and in heart Purkinje fibers.

The protein resides in the cell membrane. Its subcellular location is the recycling endosome. It localises to the synaptic cell membrane. The protein localises to the cytoplasmic vesicle. It is found in the perikaryon. The protein resides in the cell projection. Its subcellular location is the dendrite. It localises to the apical cell membrane. It catalyses the reaction K(+)(in) = K(+)(out). The enzyme catalyses NH4(+)(in) = NH4(+)(out). It carries out the reaction Na(+)(in) = Na(+)(out). The catalysed reaction is Rb(+)(in) = Rb(+)(out). It catalyses the reaction Cs(+)(in) = Cs(+)(out). The enzyme catalyses Li(+)(in) = Li(+)(out). It carries out the reaction L-glutamate(out) = L-glutamate(in). The catalysed reaction is chloride(in) = chloride(out). Its activity is regulated as follows. Inhibited by Ba(2+) ions and quinidine. Inhibited by quinine. Is slightly inhibited by 10 mM tetraethylammonium (TEA), and only marginally inhibited by 4-aminopyridine, charybdotoxin and dendrotoxin. Lowering the extracellular pH to below 6.5 transiently activates the channel, and then inhibits channel activity. Inhibited when the intracellular pH is decreased down to pH 6.0, but this may be due to indirect effects. In terms of biological role, ion channel that contributes to passive transmembrane potassium transport and to the regulation of the resting membrane potential in brain astrocytes, but also in kidney and in other tissues. Forms dimeric channels through which potassium ions pass in accordance with their electrochemical gradient. The channel is selective for K(+) ions at physiological potassium concentrations and at neutral pH, but becomes permeable to Na(+) at subphysiological K(+) levels and upon acidification of the extracellular medium. The homodimer has very low potassium channel activity, when expressed in heterologous systems, and can function as weakly inward rectifying potassium channel. Channel activity is modulated by activation of serotonin receptors. Heterodimeric channels containing KCNK1 and KCNK2 have much higher activity, and may represent the predominant form in astrocytes. Heterodimeric channels containing KCNK1 and KCNK3 or KCNK9 have much higher activity. Heterodimeric channels formed by KCNK1 and KCNK9 may contribute to halothane-sensitive currents. Mediates outward rectifying potassium currents in dentate gyrus granule cells and contributes to the regulation of their resting membrane potential. Contributes to the regulation of action potential firing in dentate gyrus granule cells and down-regulates their intrinsic excitability. In astrocytes, the heterodimer formed by KCNK1 and KCNK2 is required for rapid glutamate release in response to activation of G-protein coupled receptors, such as F2R and CNR1. Required for normal ion and water transport in the kidney. Contributes to the regulation of the resting membrane potential of pancreatic beta cells. The low channel activity of homodimeric KCNK1 may be due to sumoylation. The low channel activity may be due to rapid internalization from the cell membrane and retention in recycling endosomes. Permeable to monovalent cations with ion selectivity for K(+) &gt; Rb(+) &gt;&gt; NH4(+) &gt;&gt; Cs(+) = Na(+) = Li(+). This chain is Potassium channel subfamily K member 1 (KCNK1), found in Homo sapiens (Human).